A 132-amino-acid chain; its full sequence is Ribosome-binding factor A (132 aa).

The tract at residues 113–132 (EANSTRAKDDDEADTPAKDD) is disordered.

The protein belongs to the RbfA family. In terms of assembly, monomer. Binds 30S ribosomal subunits, but not 50S ribosomal subunits or 70S ribosomes.

The protein localises to the cytoplasm. Its function is as follows. One of several proteins that assist in the late maturation steps of the functional core of the 30S ribosomal subunit. Associates with free 30S ribosomal subunits (but not with 30S subunits that are part of 70S ribosomes or polysomes). Required for efficient processing of 16S rRNA. May interact with the 5'-terminal helix region of 16S rRNA. The polypeptide is Ribosome-binding factor A (Burkholderia cenocepacia (strain HI2424)).